The primary structure comprises 175 residues: Small ribosomal subunit protein uS9 (175 aa).

It belongs to the universal ribosomal protein uS9 family.

In Streptomyces griseus subsp. griseus (strain JCM 4626 / CBS 651.72 / NBRC 13350 / KCC S-0626 / ISP 5235), this protein is Small ribosomal subunit protein uS9.